Here is a 161-residue protein sequence, read N- to C-terminus: MEYNTSELCDLFADSVDVVDPIFASFGGRYSFGGEITTVKCFEDRGLIDRVLAQPGAGKVLLIDGGGSSRRALFDASSAQVAIDNDWEGVVIYGSVREVDSLAELDIGVLAVAAIPVNAECESVGEVDLPVNFGGVTFLPEDHLYADSTGVILSPEPLDLD.

It belongs to the RraA family. Homotrimer. Binds to both RNA-binding sites in the C-terminal region of Rne and to RhlB.

It localises to the cytoplasm. Its function is as follows. Globally modulates RNA abundance by binding to RNase E (Rne) and regulating its endonucleolytic activity. Can modulate Rne action in a substrate-dependent manner by altering the composition of the degradosome. Modulates RNA-binding and helicase activities of the degradosome. The chain is Regulator of ribonuclease activity A from Alteromonas mediterranea (strain DSM 17117 / CIP 110805 / LMG 28347 / Deep ecotype).